Consider the following 923-residue polypeptide: Protein translocase subunit SecA (923 aa).

ATP-binding positions include glutamine 86, 104–108 (GEGKT), and aspartate 512. Cysteine 906, cysteine 908, cysteine 917, and histidine 918 together coordinate Zn(2+).

It belongs to the SecA family. In terms of assembly, monomer and homodimer. Part of the essential Sec protein translocation apparatus which comprises SecA, SecYEG and auxiliary proteins SecDF-YajC and YidC. Requires Zn(2+) as cofactor.

It is found in the cell inner membrane. It localises to the cytoplasm. The enzyme catalyses ATP + H2O + cellular proteinSide 1 = ADP + phosphate + cellular proteinSide 2.. Part of the Sec protein translocase complex. Interacts with the SecYEG preprotein conducting channel. Has a central role in coupling the hydrolysis of ATP to the transfer of proteins into and across the cell membrane, serving both as a receptor for the preprotein-SecB complex and as an ATP-driven molecular motor driving the stepwise translocation of polypeptide chains across the membrane. The polypeptide is Protein translocase subunit SecA (Caulobacter vibrioides (strain ATCC 19089 / CIP 103742 / CB 15) (Caulobacter crescentus)).